The following is a 298-amino-acid chain: Proline iminopeptidase (298 aa).

The AB hydrolase-1 domain occupies 26–277; it reads VLLLHGGPAM…NGSHLAMWDD (252 aa). Catalysis depends on serine 103, which acts as the Nucleophile. The active site involves aspartate 244. Histidine 271 functions as the Proton donor in the catalytic mechanism.

Belongs to the peptidase S33 family. As to quaternary structure, monomer.

The catalysed reaction is Release of N-terminal proline from a peptide.. Releases the N-terminal proline from various substrates. Cleaves specifically Pro-betaNA and small peptides containing proline at the amino terminal. No activity against hydroxyproline-betaNA. The chain is Proline iminopeptidase (fpaP) from Elizabethkingia meningoseptica (Chryseobacterium meningosepticum).